The chain runs to 306 residues: tRNA-cytidine(32) 2-sulfurtransferase (306 aa).

The PP-loop motif signature appears at 44–49 (SGGKDS). [4Fe-4S] cluster-binding residues include cysteine 119, cysteine 122, and cysteine 210.

This sequence belongs to the TtcA family. Homodimer. It depends on Mg(2+) as a cofactor. Requires [4Fe-4S] cluster as cofactor.

It is found in the cytoplasm. The catalysed reaction is cytidine(32) in tRNA + S-sulfanyl-L-cysteinyl-[cysteine desulfurase] + AH2 + ATP = 2-thiocytidine(32) in tRNA + L-cysteinyl-[cysteine desulfurase] + A + AMP + diphosphate + H(+). It participates in tRNA modification. In terms of biological role, catalyzes the ATP-dependent 2-thiolation of cytidine in position 32 of tRNA, to form 2-thiocytidine (s(2)C32). The sulfur atoms are provided by the cysteine/cysteine desulfurase (IscS) system. This Photorhabdus laumondii subsp. laumondii (strain DSM 15139 / CIP 105565 / TT01) (Photorhabdus luminescens subsp. laumondii) protein is tRNA-cytidine(32) 2-sulfurtransferase.